We begin with the raw amino-acid sequence, 465 residues long: Iron-sulfur cluster assembly SufBD family protein SH2035 (465 aa).

The protein belongs to the iron-sulfur cluster assembly SufBD family.

This chain is Iron-sulfur cluster assembly SufBD family protein SH2035, found in Staphylococcus haemolyticus (strain JCSC1435).